Consider the following 138-residue polypeptide: Phosphoribosyl-AMP cyclohydrolase (138 aa).

Mg(2+) is bound at residue Asp-84. Cys-85 lines the Zn(2+) pocket. Residues Asp-86 and Asp-88 each coordinate Mg(2+). 2 residues coordinate Zn(2+): Cys-102 and Cys-109.

The protein belongs to the PRA-CH family. Homodimer. It depends on Mg(2+) as a cofactor. Requires Zn(2+) as cofactor.

It is found in the cytoplasm. It catalyses the reaction 1-(5-phospho-beta-D-ribosyl)-5'-AMP + H2O = 1-(5-phospho-beta-D-ribosyl)-5-[(5-phospho-beta-D-ribosylamino)methylideneamino]imidazole-4-carboxamide. The protein operates within amino-acid biosynthesis; L-histidine biosynthesis; L-histidine from 5-phospho-alpha-D-ribose 1-diphosphate: step 3/9. Functionally, catalyzes the hydrolysis of the adenine ring of phosphoribosyl-AMP. The polypeptide is Phosphoribosyl-AMP cyclohydrolase (Burkholderia multivorans (strain ATCC 17616 / 249)).